The following is a 275-amino-acid chain: MTNDLYAVVGNPISHSKSPRIHSLFAQQTGEAVEYTAIQAPLEDFAGTVHHFFDHGGKGLNITVPFKEQAWTLAEHRTHRAELAGAANTLYLDQEDQLVADNTDGVGIVRDLRDNHGVPLKGARVLVLGAGGAVRGVLGPLLDEQPASVVVANRTVARAEALARLFGREHSGIELSACGFEQVEGPFDLVINGTSASLKGDLPAITADVIRADTVVYDMMYSLQTTTFNQWALDHGAVRVFDGLGMLVEQAAEAFFVWRGVRPETSAVTEELRTD.

Shikimate contacts are provided by residues 16-18 and Thr63; that span reads SKS. Lys67 functions as the Proton acceptor in the catalytic mechanism. Residues Asn88 and Asp104 each contribute to the shikimate site. Residues 129–133, 153–158, and Met219 contribute to the NADP(+) site; these read GAGGA and NRTVAR. Shikimate is bound at residue Tyr221. Gly243 serves as a coordination point for NADP(+).

Belongs to the shikimate dehydrogenase family. As to quaternary structure, homodimer.

The enzyme catalyses shikimate + NADP(+) = 3-dehydroshikimate + NADPH + H(+). It participates in metabolic intermediate biosynthesis; chorismate biosynthesis; chorismate from D-erythrose 4-phosphate and phosphoenolpyruvate: step 4/7. Involved in the biosynthesis of the chorismate, which leads to the biosynthesis of aromatic amino acids. Catalyzes the reversible NADPH linked reduction of 3-dehydroshikimate (DHSA) to yield shikimate (SA). The protein is Shikimate dehydrogenase (NADP(+)) of Marinobacter nauticus (strain ATCC 700491 / DSM 11845 / VT8) (Marinobacter aquaeolei).